A 787-amino-acid chain; its full sequence is Phenylalanine--tRNA ligase beta subunit (787 aa).

In terms of domain architecture, tRNA-binding spans 39-149 (APAFAGVVIA…EDAPVGTNIR (111 aa)). Residues 400–475 (PEVKQVGLRL…RVYGYENIPD (76 aa)) enclose the B5 domain. Residues Asp453, Asp459, Glu462, and Glu463 each coordinate Mg(2+). Positions 694-786 (SKFQPVRRDL…AATAAGARLR (93 aa)) constitute an FDX-ACB domain.

Belongs to the phenylalanyl-tRNA synthetase beta subunit family. Type 1 subfamily. As to quaternary structure, tetramer of two alpha and two beta subunits. Mg(2+) is required as a cofactor.

It is found in the cytoplasm. The catalysed reaction is tRNA(Phe) + L-phenylalanine + ATP = L-phenylalanyl-tRNA(Phe) + AMP + diphosphate + H(+). The sequence is that of Phenylalanine--tRNA ligase beta subunit (pheT) from Neisseria meningitidis serogroup A / serotype 4A (strain DSM 15465 / Z2491).